The sequence spans 312 residues: Acetaldehyde dehydrogenase (312 aa).

12 to 15 (SGNV) contributes to the NAD(+) binding site. Residue Cys-132 is the Acyl-thioester intermediate of the active site. NAD(+) is bound by residues 163–171 (SAGPGTRAN) and Asn-290.

It belongs to the acetaldehyde dehydrogenase family.

The enzyme catalyses acetaldehyde + NAD(+) + CoA = acetyl-CoA + NADH + H(+). This is Acetaldehyde dehydrogenase (cbzQ) from Pseudomonas putida (Arthrobacter siderocapsulatus).